A 90-amino-acid polypeptide reads, in one-letter code: Probable Fe(2+)-trafficking protein (90 aa).

This sequence belongs to the Fe(2+)-trafficking protein family.

Functionally, could be a mediator in iron transactions between iron acquisition and iron-requiring processes, such as synthesis and/or repair of Fe-S clusters in biosynthetic enzymes. This is Probable Fe(2+)-trafficking protein from Aliivibrio fischeri (strain ATCC 700601 / ES114) (Vibrio fischeri).